Reading from the N-terminus, the 447-residue chain is 3-phosphoshikimate 1-carboxyvinyltransferase (447 aa).

3-phosphoshikimate is bound by residues K36, S37, and R41. A phosphoenolpyruvate-binding site is contributed by K36. Positions 109 and 138 each coordinate phosphoenolpyruvate. 4 residues coordinate 3-phosphoshikimate: S183, Q185, D333, and K360. Q185 contacts phosphoenolpyruvate. D333 functions as the Proton acceptor in the catalytic mechanism. The phosphoenolpyruvate site is built by R364 and R406.

It belongs to the EPSP synthase family. In terms of assembly, monomer.

The protein localises to the cytoplasm. It catalyses the reaction 3-phosphoshikimate + phosphoenolpyruvate = 5-O-(1-carboxyvinyl)-3-phosphoshikimate + phosphate. It functions in the pathway metabolic intermediate biosynthesis; chorismate biosynthesis; chorismate from D-erythrose 4-phosphate and phosphoenolpyruvate: step 6/7. Catalyzes the transfer of the enolpyruvyl moiety of phosphoenolpyruvate (PEP) to the 5-hydroxyl of shikimate-3-phosphate (S3P) to produce enolpyruvyl shikimate-3-phosphate and inorganic phosphate. This Synechocystis sp. (strain ATCC 27184 / PCC 6803 / Kazusa) protein is 3-phosphoshikimate 1-carboxyvinyltransferase.